The chain runs to 84 residues: RNA-binding protein Hfq (84 aa).

In terms of domain architecture, Sm spans 11–71 (DTFLNHVRKN…ISTIMPGHPV (61 aa)).

This sequence belongs to the Hfq family. As to quaternary structure, homohexamer.

Functionally, RNA chaperone that binds small regulatory RNA (sRNAs) and mRNAs to facilitate mRNA translational regulation in response to envelope stress, environmental stress and changes in metabolite concentrations. Also binds with high specificity to tRNAs. In Methylobacterium nodulans (strain LMG 21967 / CNCM I-2342 / ORS 2060), this protein is RNA-binding protein Hfq.